We begin with the raw amino-acid sequence, 270 residues long: Putative phosphoenolpyruvate synthase regulatory protein (270 aa).

Residue 150 to 157 (GVSRCGKT) participates in ADP binding.

It belongs to the pyruvate, phosphate/water dikinase regulatory protein family. PSRP subfamily.

The catalysed reaction is [pyruvate, water dikinase] + ADP = [pyruvate, water dikinase]-phosphate + AMP + H(+). It carries out the reaction [pyruvate, water dikinase]-phosphate + phosphate + H(+) = [pyruvate, water dikinase] + diphosphate. Functionally, bifunctional serine/threonine kinase and phosphorylase involved in the regulation of the phosphoenolpyruvate synthase (PEPS) by catalyzing its phosphorylation/dephosphorylation. The sequence is that of Putative phosphoenolpyruvate synthase regulatory protein from Shewanella pealeana (strain ATCC 700345 / ANG-SQ1).